Consider the following 237-residue polypeptide: UPF0053 protein HI_0056 (237 aa).

7 helical membrane passes run 12-32 (ISLVTLAALEIVLGIDNIIFI), 49-69 (ILGLALAMLTRILLLMSLAWI), 90-110 (ILLIGGLFLIIKSSGEIKEAI), 126-146 (YLGVLIQIAVLDIVFSLDSVI), 151-171 (MASHLPVMILAIMIAVGVMMF), 188-208 (ILALAFLVLVGISLIAESLDI), and 210-230 (IPKGYIYFAMGFSVVVEMINI).

It belongs to the UPF0053 family.

It localises to the cell membrane. This chain is UPF0053 protein HI_0056, found in Haemophilus influenzae (strain ATCC 51907 / DSM 11121 / KW20 / Rd).